The following is a 477-amino-acid chain: Actin-related protein 7 (477 aa).

This sequence belongs to the actin family. Forms a heterodimer with ARP9. Interacts with NPL6. Component of the two forms of the RSC complex composed of at least either RSC1 or RSC2, and ARP7, ARP9, LDB7, NPL6, RSC3, RSC30, RSC4, RSC58, RSC6, RSC8, RSC9, SFH1, STH1, HTL1 and probably RTT102. The complexes interact with histone and histone variant components of centromeric chromatin. Component of the SWI/SNF global transcription activator complex. The 1.14 MDa SWI/SNF complex is composed of 11 different subunits: one copy each of SWI1, SNF2/SWI2, SNF5, SNF12/SWP73, ARP7/SWP61, ARP9/SWP59; two copies each of SWI3, SNF6, SNF11, SWP82; and three copies of TAF14/SWP29.

The protein resides in the nucleus. Its function is as follows. Component of the chromatin structure remodeling complex (RSC), which is involved in transcription regulation and nucleosome positioning. RSC is responsible for the transfer of a histone octamer from a nucleosome core particle to naked DNA. The reaction requires ATP and involves an activated RSC-nucleosome intermediate. Remodeling reaction also involves DNA translocation, DNA twist and conformational change. As a reconfigurer of centromeric and flanking nucleosomes, RSC complex is required both for proper kinetochore function in chromosome segregation and, via a PKC1-dependent signaling pathway, for organization of the cellular cytoskeleton. This subunit is involved in transcriptional regulation. Heterodimer of ARP7 and ARP9 functions with HMG box proteins to facilitate proper chromatin architecture. Heterodimer formation is necessary for assembly into RSC complex. Part of the SWI/SNF complex, an ATP-dependent chromatin remodeling complex, is required for the positive and negative regulation of gene expression of a large number of genes. It changes chromatin structure by altering DNA-histone contacts within a nucleosome, leading eventually to a change in nucleosome position, thus facilitating or repressing binding of gene-specific transcription factors. This is Actin-related protein 7 (ARP7) from Saccharomyces cerevisiae (strain ATCC 204508 / S288c) (Baker's yeast).